A 36-amino-acid chain; its full sequence is MCLSLGQRCGRHSNCCGYLCCFYDKCVVTAIGCGHY.

4 disulfides stabilise this stretch: Cys2–Cys16, Cys9–Cys21, Cys15–Cys26, and Cys20–Cys33.

It belongs to the conotoxin I1 superfamily. As to expression, expressed by the venom duct.

It is found in the secreted. This chain is Conotoxin Bt11.4, found in Conus betulinus (Beech cone).